A 544-amino-acid chain; its full sequence is Hydroxylamine reductase (544 aa).

Cys3, Cys6, Cys15, and Cys21 together coordinate [4Fe-4S] cluster. 8 residues coordinate hybrid [4Fe-2O-2S] cluster: His244, Glu268, Cys313, Cys400, Cys428, Cys453, Glu487, and Lys489. Cys400 bears the Cysteine persulfide mark.

It belongs to the HCP family. Requires [4Fe-4S] cluster as cofactor. Hybrid [4Fe-2O-2S] cluster is required as a cofactor.

It is found in the cytoplasm. It carries out the reaction A + NH4(+) + H2O = hydroxylamine + AH2 + H(+). Its function is as follows. Catalyzes the reduction of hydroxylamine to form NH(3) and H(2)O. This chain is Hydroxylamine reductase, found in Trichormus variabilis (strain ATCC 29413 / PCC 7937) (Anabaena variabilis).